The chain runs to 156 residues: Anaerobic nitrite reductase HB2 (156 aa).

Residues 2–151 form the Globin domain; it reads GFTDKQEALV…LASAIKAEMH (150 aa). Positions 35 to 39 match the Homodimerization motif; sequence EIAPV. Heme b is bound by residues serine 45, lysine 59, histidine 63, and histidine 98. The short motif at 105-117 is the Homodimerization element; sequence DPHFEVVKEALLR.

The protein belongs to the plant globin family. In terms of assembly, homodimer. Requires heme b as cofactor.

The protein localises to the cytoplasm. It localises to the nucleus. It carries out the reaction Fe(III)-heme b-[protein] + nitric oxide + H2O = Fe(II)-heme b-[protein] + nitrite + 2 H(+). Phytoglobin that reduces nitrite to nitric oxide (NO) under anoxic conditions (e.g. during flooding or in waterlogged soil). May not function as an oxygen storage or transport protein. Has an unusually high affinity for O(2) through an hexacoordinate heme iron because of a very low dissociation constant. In Solanum lycopersicum (Tomato), this protein is Anaerobic nitrite reductase HB2.